A 152-amino-acid chain; its full sequence is Male-specific protein scotti (152 aa).

Belongs to the male-specific scotti family.

Post-meiotically transcribed gene that has a role in late spermiogenesis; required for actin cone progression during spermatid individualization. The sequence is that of Male-specific protein scotti from Drosophila mojavensis (Fruit fly).